The chain runs to 312 residues: Glycine--tRNA ligase alpha subunit (312 aa).

This sequence belongs to the class-II aminoacyl-tRNA synthetase family. Tetramer of two alpha and two beta subunits.

The protein resides in the cytoplasm. It carries out the reaction tRNA(Gly) + glycine + ATP = glycyl-tRNA(Gly) + AMP + diphosphate. The polypeptide is Glycine--tRNA ligase alpha subunit (Thiobacillus denitrificans (strain ATCC 25259 / T1)).